The following is a 217-amino-acid chain: Cytidylate kinase (217 aa).

9 to 17 contributes to the ATP binding site; sequence GPAGAGKST.

Belongs to the cytidylate kinase family. Type 1 subfamily.

It localises to the cytoplasm. The catalysed reaction is CMP + ATP = CDP + ADP. It catalyses the reaction dCMP + ATP = dCDP + ADP. This chain is Cytidylate kinase, found in Clostridium acetobutylicum (strain ATCC 824 / DSM 792 / JCM 1419 / IAM 19013 / LMG 5710 / NBRC 13948 / NRRL B-527 / VKM B-1787 / 2291 / W).